We begin with the raw amino-acid sequence, 214 residues long: tRNA (guanine-N(7)-)-methyltransferase (214 aa).

S-adenosyl-L-methionine-binding residues include Glu-43, Glu-68, Asp-95, and Asp-117. Asp-117 is an active-site residue. Substrate contacts are provided by residues Lys-121, Asp-153, and 191–194; that span reads TEYE.

This sequence belongs to the class I-like SAM-binding methyltransferase superfamily. TrmB family.

The enzyme catalyses guanosine(46) in tRNA + S-adenosyl-L-methionine = N(7)-methylguanosine(46) in tRNA + S-adenosyl-L-homocysteine. It participates in tRNA modification; N(7)-methylguanine-tRNA biosynthesis. Its function is as follows. Catalyzes the formation of N(7)-methylguanine at position 46 (m7G46) in tRNA. The polypeptide is tRNA (guanine-N(7)-)-methyltransferase (Lachnoclostridium phytofermentans (strain ATCC 700394 / DSM 18823 / ISDg) (Clostridium phytofermentans)).